The following is a 459-amino-acid chain: Peptidyl-prolyl cis-trans isomerase FKBP4 (459 aa).

The residue at position 1 (Met1) is an N-acetylmethionine; in peptidyl-prolyl cis-trans isomerase FKBP4; alternate. The disordered stretch occupies residues 1–24 (MTAEEMKATESGAQSAPLPMEGVD). An N-acetylthreonine; in peptidyl-prolyl cis-trans isomerase FKBP4, N-terminally processed; partial modification is found at Thr2. Residues 50-138 (GDRVFVHYTG…VFEVELFEFK (89 aa)) enclose the PPIase FKBP-type 1 domain. Phosphothreonine; by CK2 is present on Thr143. The PPIase FKBP-type 2 domain maps to 167–253 (GAIVEVALEG…KYELHLKSFE (87 aa)). Phosphotyrosine is present on Tyr220. An interaction with tubulin region spans residues 267-400 (LEQSTIVKER…TQLAVCQQRI (134 aa)). TPR repeat units follow at residues 270–303 (STIVKERGTVYFKEGKYKQALLQYKKIVSWLEYE), 319–352 (LASHLNLAMCHLKLQAFSAAIESCNKALELDSNN), and 353–386 (EKGLFRRGEAHLAVNDFELARADFQKVLQLYPNN). Lys282 is subject to N6-acetyllysine. Arg373 is subject to Omega-N-methylarginine. A disordered region spans residues 421-459 (EENKAKAEASSGDHPTDTEMKEEQKSNTAGSQSQVETEA). Residues 434-445 (HPTDTEMKEEQK) show a composition bias toward basic and acidic residues. Thr436 bears the Phosphothreonine mark. Lys441 is covalently cross-linked (Glycyl lysine isopeptide (Lys-Gly) (interchain with G-Cter in SUMO1)). Over residues 446-459 (SNTAGSQSQVETEA) the composition is skewed to polar residues. 2 positions are modified to phosphoserine: Ser451 and Ser453.

As to quaternary structure, homodimer. Interacts with GLMN. Associates with HSP90AA1 and HSP70 in steroid hormone receptor complexes. Also interacts with peroxisomal phytanoyl-CoA alpha-hydroxylase (PHYH). Interacts with NR3C1 and dynein. Interacts with HSF1 in the HSP90 complex. Associates with tubulin. Interacts with MAPT/TAU. Interacts (via TPR domain) with S100A1, S100A2 and S100A6; the interaction is Ca(2+) dependent. Interaction with S100A1 and S100A2 (but not with S100A6) leads to inhibition of FKBP4-HSP90 interaction. Interacts with dynein; causes partially NR3C1 transport to the nucleus. In terms of processing, phosphorylation by CK2 results in loss of HSP90 binding activity. In terms of tissue distribution, widely expressed.

The protein localises to the cytoplasm. It is found in the cytosol. It localises to the mitochondrion. The protein resides in the nucleus. Its subcellular location is the cytoskeleton. The protein localises to the cell projection. It is found in the axon. The catalysed reaction is [protein]-peptidylproline (omega=180) = [protein]-peptidylproline (omega=0). With respect to regulation, inhibited by FK506. Immunophilin protein with PPIase and co-chaperone activities. Component of steroid receptors heterocomplexes through interaction with heat-shock protein 90 (HSP90). May play a role in the intracellular trafficking of heterooligomeric forms of steroid hormone receptors between cytoplasm and nuclear compartments. The isomerase activity controls neuronal growth cones via regulation of TRPC1 channel opening. Also acts as a regulator of microtubule dynamics by inhibiting MAPT/TAU ability to promote microtubule assembly. May have a protective role against oxidative stress in mitochondria. The chain is Peptidyl-prolyl cis-trans isomerase FKBP4 (FKBP4) from Homo sapiens (Human).